We begin with the raw amino-acid sequence, 391 residues long: Putative alpha-ketoglutarate-dependent sulfonate dioxygenase (391 aa).

Fe cation contacts are provided by His-204 and Asp-206. 2 residues coordinate 2-oxoglutarate: Thr-231 and Trp-338. Fe cation is bound at residue His-353. 2-oxoglutarate contacts are provided by Arg-364 and Arg-368.

It belongs to the TfdA dioxygenase family. It depends on Fe(2+) as a cofactor.

It participates in organosulfur degradation; alkanesulfonate degradation. Acts as an alpha-ketoglutarate-dependent dioxygenase active on sulfonates. The sequence is that of Putative alpha-ketoglutarate-dependent sulfonate dioxygenase from Schizosaccharomyces pombe (strain 972 / ATCC 24843) (Fission yeast).